The primary structure comprises 258 residues: UPF0246 protein CKO_03380 (258 aa).

It belongs to the UPF0246 family.

This Citrobacter koseri (strain ATCC BAA-895 / CDC 4225-83 / SGSC4696) protein is UPF0246 protein CKO_03380.